Consider the following 143-residue polypeptide: Transcriptional regulator MraZ (143 aa).

SpoVT-AbrB domains lie at 5-47 and 76-119; these read EYQH…PMHE and ATEC…SKVI.

This sequence belongs to the MraZ family. In terms of assembly, forms oligomers.

The protein resides in the cytoplasm. It is found in the nucleoid. This Bacillus subtilis (strain 168) protein is Transcriptional regulator MraZ.